A 152-amino-acid chain; its full sequence is Transcriptional regulator MraZ (152 aa).

2 SpoVT-AbrB domains span residues 5-52 (ASAI…PADE) and 81-124 (AHEI…DEAQ).

The protein belongs to the MraZ family. In terms of assembly, forms oligomers.

It localises to the cytoplasm. The protein resides in the nucleoid. The polypeptide is Transcriptional regulator MraZ (Shewanella amazonensis (strain ATCC BAA-1098 / SB2B)).